The following is a 409-amino-acid chain: Elongation factor Tu (409 aa).

Residues 10 to 214 (KPHVNIGTIG…AVDAYIPTPE (205 aa)) enclose the tr-type G domain. The interval 19–26 (GHVDHGKT) is G1. 19–26 (GHVDHGKT) contacts GTP. Thr26 is a binding site for Mg(2+). The segment at 60–64 (GITIN) is G2. Residues 81–84 (DCPG) are G3. GTP contacts are provided by residues 81-85 (DCPGH) and 136-139 (NKKD). The tract at residues 136-139 (NKKD) is G4. The tract at residues 174-176 (SAL) is G5.

It belongs to the TRAFAC class translation factor GTPase superfamily. Classic translation factor GTPase family. EF-Tu/EF-1A subfamily. Monomer.

Its subcellular location is the cytoplasm. It carries out the reaction GTP + H2O = GDP + phosphate + H(+). Functionally, GTP hydrolase that promotes the GTP-dependent binding of aminoacyl-tRNA to the A-site of ribosomes during protein biosynthesis. The protein is Elongation factor Tu of Gloeobacter violaceus (strain ATCC 29082 / PCC 7421).